Here is a 358-residue protein sequence, read N- to C-terminus: 5,10-methenyltetrahydromethanopterin hydrogenase (358 aa).

It belongs to the HMD family. As to quaternary structure, homotetramer.

The catalysed reaction is 5,10-methenyl-5,6,7,8-tetrahydromethanopterin + H2 = 5,10-methylenetetrahydromethanopterin + H(+). It functions in the pathway one-carbon metabolism; methanogenesis from CO(2); 5,10-methylene-5,6,7,8-tetrahydromethanopterin from 5,10-methenyl-5,6,7,8-tetrahydromethanopterin (hydrogen route): step 1/1. Activity requires salt; 100 mM potassium phosphate, potassium chloride, and sodium chloride are equally effective. Functionally, catalyzes the reversible reduction of methenyl-H(4)MPT(+) to methylene-H(4)MPT. The chain is 5,10-methenyltetrahydromethanopterin hydrogenase from Methanopyrus kandleri (strain AV19 / DSM 6324 / JCM 9639 / NBRC 100938).